Reading from the N-terminus, the 557-residue chain is Potassium-transporting ATPase potassium-binding subunit (557 aa).

Transmembrane regions (helical) follow at residues 1-21 (MEILQIAIILIVFVLLCIPIG), 62-82 (QYIFALLMCNAVPAIIGYIIL), 132-152 (IVITFFMFFAAATGIAVALAF), 176-196 (ILLPLSIIVAIFYIGQGVPQT), 253-273 (VQIITLLLLAGSMVVCFGHMI), 279-299 (AVAIFAAMMVLLLAGAAICFS), 371-391 (IFGGVGVGFMNMIMYAILTVF), 415-435 (LVAFAIIVHPFLILMSSALAL), 482-502 (VSAGVVMFLGRYLSIIILLAV), and 528-548 (VTLIVIIVIIGALTFLPAVAL).

It belongs to the KdpA family. The system is composed of three essential subunits: KdpA, KdpB and KdpC.

It is found in the cell membrane. In terms of biological role, part of the high-affinity ATP-driven potassium transport (or Kdp) system, which catalyzes the hydrolysis of ATP coupled with the electrogenic transport of potassium into the cytoplasm. This subunit binds the extracellular potassium ions and delivers the ions to the membrane domain of KdpB through an intramembrane tunnel. The sequence is that of Potassium-transporting ATPase potassium-binding subunit from Clostridium acetobutylicum (strain ATCC 824 / DSM 792 / JCM 1419 / IAM 19013 / LMG 5710 / NBRC 13948 / NRRL B-527 / VKM B-1787 / 2291 / W).